A 243-amino-acid chain; its full sequence is Small ribosomal subunit protein mS23 (243 aa).

The protein belongs to the mitochondrion-specific ribosomal protein mS23 family. As to quaternary structure, component of the mitochondrial small ribosomal subunit.

The protein resides in the mitochondrion. The chain is Small ribosomal subunit protein mS23 (rsm25) from Emericella nidulans (strain FGSC A4 / ATCC 38163 / CBS 112.46 / NRRL 194 / M139) (Aspergillus nidulans).